The primary structure comprises 451 residues: uncharacterized protein (451 aa).

The HD domain maps to 50 to 147; the sequence is RFEHSLGTMF…DVDADRMDYL (98 aa).

This is an uncharacterized protein from Methanocaldococcus jannaschii (strain ATCC 43067 / DSM 2661 / JAL-1 / JCM 10045 / NBRC 100440) (Methanococcus jannaschii).